The sequence spans 313 residues: Protoheme IX farnesyltransferase (313 aa).

A run of 9 helical transmembrane segments spans residues 33–53 (IALMKLRVVELLLVSTVPVML), 59–79 (MPSWWLIAVTLLAGTLSAGSA), 107–127 (VEPAQALRFGIALGIISTLMF), 129–149 (LLVNWTSAVLSVGAIAFYVFV), 162–182 (IVIGGAAGCFPVLIGWSAVTG), 188–208 (AVLLFAVVFFWTPPHFWALAI), 212–232 (DDYAAAGVPMLPVVATLEVVT), 252–272 (VADIGLVYLVPAVLLGAWFVA), and 292–312 (LFHMSITYLTLLFAALAAAAL).

It belongs to the UbiA prenyltransferase family. Protoheme IX farnesyltransferase subfamily.

The protein resides in the cell membrane. The catalysed reaction is heme b + (2E,6E)-farnesyl diphosphate + H2O = Fe(II)-heme o + diphosphate. The protein operates within porphyrin-containing compound metabolism; heme O biosynthesis; heme O from protoheme: step 1/1. Its function is as follows. Converts heme B (protoheme IX) to heme O by substitution of the vinyl group on carbon 2 of heme B porphyrin ring with a hydroxyethyl farnesyl side group. The polypeptide is Protoheme IX farnesyltransferase (Parafrankia sp. (strain EAN1pec)).